The chain runs to 453 residues: C4-dicarboxylate TRAP transporter large permease protein DctM (453 aa).

The next 13 membrane-spanning stretches (helical) occupy residues 2–22, 50–70, 82–102, 104–124, 139–159, 172–192, 217–237, 243–263, 289–309, 326–346, 356–376, 380–400, and 417–437; these read AVAL…PIAI, AFAG…STFM, FAIA…VVAC, MFAA…SIVI, GVIC…VMVV, FLGG…AIYI, ASWG…GIFT, AVAA…MGPF, LYDA…ALIL, MLSA…ILLV, LLVI…IDPI, IMMV…LNLF, and ALPW…VPWV.

Belongs to the TRAP transporter large permease family. In terms of assembly, the complex comprises the extracytoplasmic solute receptor protein DctP, and the two transmembrane proteins DctQ and DctM.

Its subcellular location is the cell inner membrane. Its function is as follows. Part of the tripartite ATP-independent periplasmic (TRAP) transport system DctPQM involved in C4-dicarboxylates uptake. This Vibrio cholerae serotype O1 (strain ATCC 39315 / El Tor Inaba N16961) protein is C4-dicarboxylate TRAP transporter large permease protein DctM.